A 249-amino-acid chain; its full sequence is uncharacterized protein (249 aa).

Residues 30 to 65 are a coiled coil; that stretch reads KVDKLKKLEIKKLEDQKKLKEQEEKHRLTLIRLANA. Residues 66 to 97 form a disordered region; that stretch reads PPQTNSINNNNNNNNNIKTNRPPLIYGEDKDK.

This is an uncharacterized protein from Dictyostelium discoideum (Social amoeba).